The sequence spans 179 residues: Large ribosomal subunit protein uL5 (179 aa).

It belongs to the universal ribosomal protein uL5 family. Part of the 50S ribosomal subunit; part of the 5S rRNA/L5/L18/L25 subcomplex. Contacts the 5S rRNA and the P site tRNA. Forms a bridge to the 30S subunit in the 70S ribosome.

In terms of biological role, this is one of the proteins that bind and probably mediate the attachment of the 5S RNA into the large ribosomal subunit, where it forms part of the central protuberance. In the 70S ribosome it contacts protein S13 of the 30S subunit (bridge B1b), connecting the 2 subunits; this bridge is implicated in subunit movement. Contacts the P site tRNA; the 5S rRNA and some of its associated proteins might help stabilize positioning of ribosome-bound tRNAs. This chain is Large ribosomal subunit protein uL5, found in Synechococcus sp. (strain CC9311).